We begin with the raw amino-acid sequence, 452 residues long: Plasminogen-binding protein PgbA (452 aa).

Residues 265-452 form a disordered region; it reads QEAIKEPKKA…RRKALEAGKK (188 aa). 2 stretches are compositionally biased toward basic and acidic residues: residues 284–310 and 317–373; these read LEEK…DERK and KAME…KEPS. The span at 374–391 shows a compositional bias: polar residues; the sequence is DGNNATQQGEKQNAPKEN. The span at 392 to 452 shows a compositional bias: basic and acidic residues; it reads NAQKEENKPN…RRKALEAGKK (61 aa).

It localises to the cell surface. Binds plasminogen, specifically, and in a concentration and lysine-dependent manner. Plasminogen is the precursor of plasmin, a serine protease that cleaves fibrin, fibronectin, laminin and vitronectin. Acquisition of plasminogen/plasmin could enable H.pylori to degrade host components. This is Plasminogen-binding protein PgbA (pgbA) from Helicobacter pylori (strain ATCC 700392 / 26695) (Campylobacter pylori).